Here is a 341-residue protein sequence, read N- to C-terminus: Probable dual-specificity RNA methyltransferase RlmN (341 aa).

Glutamate 88 serves as the catalytic Proton acceptor. Residues glutamate 94 to arginine 314 enclose the Radical SAM core domain. A disulfide bond links cysteine 101 and cysteine 325. [4Fe-4S] cluster contacts are provided by cysteine 108, cysteine 112, and cysteine 115. S-adenosyl-L-methionine contacts are provided by residues glycine 153 to glutamate 154, serine 185, serine 206 to histidine 208, and histidine 282. Cysteine 325 (S-methylcysteine intermediate) is an active-site residue.

It belongs to the radical SAM superfamily. RlmN family. It depends on [4Fe-4S] cluster as a cofactor.

Its subcellular location is the cytoplasm. The enzyme catalyses adenosine(2503) in 23S rRNA + 2 reduced [2Fe-2S]-[ferredoxin] + 2 S-adenosyl-L-methionine = 2-methyladenosine(2503) in 23S rRNA + 5'-deoxyadenosine + L-methionine + 2 oxidized [2Fe-2S]-[ferredoxin] + S-adenosyl-L-homocysteine. It catalyses the reaction adenosine(37) in tRNA + 2 reduced [2Fe-2S]-[ferredoxin] + 2 S-adenosyl-L-methionine = 2-methyladenosine(37) in tRNA + 5'-deoxyadenosine + L-methionine + 2 oxidized [2Fe-2S]-[ferredoxin] + S-adenosyl-L-homocysteine. In terms of biological role, specifically methylates position 2 of adenine 2503 in 23S rRNA and position 2 of adenine 37 in tRNAs. The chain is Probable dual-specificity RNA methyltransferase RlmN from Porphyromonas gingivalis (strain ATCC BAA-308 / W83).